A 264-amino-acid chain; its full sequence is MHPYLDLMRHVLQYGHKKTDRTGTGTLSIFGYQMRFDLQQGFPLVTTKQCHVKSIIHELLWFLRGDTNIDYLKKNGISIWNEWADKSGELGPVYGHQWRSWTVSGDKSIDQIAQVIQQIKATPDSRRMIISAWNVGDLDKMALAPCHVLFQFYVVDGKLSCQLYQRSADIFLGVPFNIASYSLLTLMIAQCCNLKPGEFIHTFGDAHLYLNHLEQARLQLTREPKSLPIMELNPAIRNILDFRYEDFTLHNYDPHPPIKAPVAV.

Arg-21 contributes to the dUMP binding site. Position 51 (His-51) interacts with (6R)-5,10-methylene-5,6,7,8-tetrahydrofolate. 126–127 serves as a coordination point for dUMP; that stretch reads RR. Cys-146 (nucleophile) is an active-site residue. DUMP contacts are provided by residues 166–169, Asn-177, and 207–209; these read RSAD and HLY. Asp-169 lines the (6R)-5,10-methylene-5,6,7,8-tetrahydrofolate pocket. (6R)-5,10-methylene-5,6,7,8-tetrahydrofolate is bound at residue Ala-263.

It belongs to the thymidylate synthase family. Bacterial-type ThyA subfamily. As to quaternary structure, homodimer.

It localises to the cytoplasm. It catalyses the reaction dUMP + (6R)-5,10-methylene-5,6,7,8-tetrahydrofolate = 7,8-dihydrofolate + dTMP. It participates in pyrimidine metabolism; dTTP biosynthesis. In terms of biological role, catalyzes the reductive methylation of 2'-deoxyuridine-5'-monophosphate (dUMP) to 2'-deoxythymidine-5'-monophosphate (dTMP) while utilizing 5,10-methylenetetrahydrofolate (mTHF) as the methyl donor and reductant in the reaction, yielding dihydrofolate (DHF) as a by-product. This enzymatic reaction provides an intracellular de novo source of dTMP, an essential precursor for DNA biosynthesis. The protein is Thymidylate synthase of Nitrosomonas eutropha (strain DSM 101675 / C91 / Nm57).